The chain runs to 251 residues: Triosephosphate isomerase (251 aa).

9–11 (NWK) lines the substrate pocket. Catalysis depends on His-95, which acts as the Electrophile. The Proton acceptor role is filled by Glu-167. Substrate is bound by residues Gly-173, Ser-212, and 233–234 (GG).

Belongs to the triosephosphate isomerase family. In terms of assembly, homodimer.

The protein localises to the cytoplasm. The enzyme catalyses D-glyceraldehyde 3-phosphate = dihydroxyacetone phosphate. Its pathway is carbohydrate biosynthesis; gluconeogenesis. It participates in carbohydrate degradation; glycolysis; D-glyceraldehyde 3-phosphate from glycerone phosphate: step 1/1. In terms of biological role, involved in the gluconeogenesis. Catalyzes stereospecifically the conversion of dihydroxyacetone phosphate (DHAP) to D-glyceraldehyde-3-phosphate (G3P). This chain is Triosephosphate isomerase, found in Pseudomonas syringae pv. tomato (strain ATCC BAA-871 / DC3000).